The sequence spans 418 residues: D-amino acid dehydrogenase (418 aa).

Position 3-17 (3-17) interacts with FAD; it reads VLVLGAGVVGTTSAW.

It belongs to the DadA oxidoreductase family. FAD serves as cofactor.

It carries out the reaction a D-alpha-amino acid + A + H2O = a 2-oxocarboxylate + AH2 + NH4(+). Its pathway is amino-acid degradation; D-alanine degradation; NH(3) and pyruvate from D-alanine: step 1/1. In terms of biological role, oxidative deamination of D-amino acids. The sequence is that of D-amino acid dehydrogenase from Dechloromonas aromatica (strain RCB).